Here is a 393-residue protein sequence, read N- to C-terminus: Arginine biosynthesis bifunctional protein ArgJ (393 aa).

Residues threonine 145, lysine 171, threonine 182, glutamate 265, asparagine 388, and serine 393 each coordinate substrate. Residue threonine 182 is the Nucleophile of the active site.

The protein belongs to the ArgJ family. As to quaternary structure, heterotetramer of two alpha and two beta chains.

It is found in the cytoplasm. It carries out the reaction N(2)-acetyl-L-ornithine + L-glutamate = N-acetyl-L-glutamate + L-ornithine. The enzyme catalyses L-glutamate + acetyl-CoA = N-acetyl-L-glutamate + CoA + H(+). It participates in amino-acid biosynthesis; L-arginine biosynthesis; L-ornithine and N-acetyl-L-glutamate from L-glutamate and N(2)-acetyl-L-ornithine (cyclic): step 1/1. The protein operates within amino-acid biosynthesis; L-arginine biosynthesis; N(2)-acetyl-L-ornithine from L-glutamate: step 1/4. Its function is as follows. Catalyzes two activities which are involved in the cyclic version of arginine biosynthesis: the synthesis of N-acetylglutamate from glutamate and acetyl-CoA as the acetyl donor, and of ornithine by transacetylation between N(2)-acetylornithine and glutamate. The protein is Arginine biosynthesis bifunctional protein ArgJ of Nitratidesulfovibrio vulgaris (strain ATCC 29579 / DSM 644 / CCUG 34227 / NCIMB 8303 / VKM B-1760 / Hildenborough) (Desulfovibrio vulgaris).